We begin with the raw amino-acid sequence, 131 residues long: Small ribosomal subunit protein bS6m (131 aa).

This sequence belongs to the bacterial ribosomal protein bS6 family. Component of the mitochondrial small ribosomal subunit (mt-SSU). Mature yeast 74S mitochondrial ribosomes consist of a small (37S) and a large (54S) subunit. The 37S small subunit contains a 15S ribosomal RNA (15S mt-rRNA) and 34 different proteins. The 54S large subunit contains a 21S rRNA (21S mt-rRNA) and 46 different proteins.

Its subcellular location is the mitochondrion. Component of the mitochondrial ribosome (mitoribosome), a dedicated translation machinery responsible for the synthesis of mitochondrial genome-encoded proteins, including at least some of the essential transmembrane subunits of the mitochondrial respiratory chain. The mitoribosomes are attached to the mitochondrial inner membrane and translation products are cotranslationally integrated into the membrane. The polypeptide is Small ribosomal subunit protein bS6m (MRP17) (Saccharomyces cerevisiae (strain ATCC 204508 / S288c) (Baker's yeast)).